We begin with the raw amino-acid sequence, 419 residues long: MARAAGARGPAGWCRRRGRCGRGTLLAFAAWTAGWVLAAALLLRAHPGVLSERCTDEKSRRILAALCQDYQGGTLAGDLCEDLCVAGELLFQRCLHYNRGKKVLQADWRGRPVVLKSKEEAFSSFPPLSLLEEEAGEGGQDMPEAELLLMVAGEVKSALGLELSNSSLGPWWPGRRGPRWRGQLASLWALLQQEEYVYFSLLQDLSPHVLPVLGSCGHFYAVEFLAAGSPHHRALFPLDRAPGAPGGGQAKAISDIALSFLDMVNHFDSDFSHRLHLCDIKPENFAIRSDFTVVAIDVDMAFFEPKMREILEQNCTGDEDCNFFDCFSRCDLRVNKCGAQRVNNNLQVICDKIFRHWFSAPLKSSAVSFQLQLQLQEAVQECADPGVPSGNTRRAASSVFWKLRQLLQATLRELQEAEK.

At 1–22 (MARAAGARGPAGWCRRRGRCGR) the chain is on the cytoplasmic side. A May mediate ER retention motif is present at residues 16–17 (RR). The helical transmembrane segment at 23–43 (GTLLAFAAWTAGWVLAAALLL) threads the bilayer. At 44–419 (RAHPGVLSER…TLRELQEAEK (376 aa)) the chain is on the lumenal side.

It belongs to the DIPK family. In terms of processing, among the many cysteines in the lumenal domain, most are probably involved in disulfide bonds.

It is found in the endoplasmic reticulum membrane. The chain is Divergent protein kinase domain 1C from Homo sapiens (Human).